The primary structure comprises 270 residues: MTQLEGPENPDRIGALILFARRWSLEIIGLLLIGIAGMLFLELQPTIPRFWQVSFLAAVFASPIAYYTGSTVVRWLYDPKWLYLIDLSAAEEKGSLYRLPESQFRDLEVLDGQLDRLAPGLYVGKRVDLENNRVAGTWRGTLSDRDLLLSLRKVRECRGQLEEDARQGFILRSSAYTVVRRAVRDTTMQVVKTFERGSLPDSGEAMNNAIHSELEEFGITDNLEETIEDLAEEKLADSDLEADSDDSESFEFVENPEPSENGSEPTIKND.

Residues 235-270 form a disordered region; the sequence is LADSDLEADSDDSESFEFVENPEPSENGSEPTIKND. A compositionally biased stretch (acidic residues) spans 238 to 251; that stretch reads SDLEADSDDSESFE. Positions 255–270 are enriched in low complexity; sequence NPEPSENGSEPTIKND.

This is an uncharacterized protein from Halorubrum sp. PV6 (HRPV-1).